The chain runs to 1088 residues: RNA-directed RNA polymerase (1088 aa).

In terms of domain architecture, RdRp catalytic spans Leu501 to Ile687.

The protein belongs to the reoviridae RNA-directed RNA polymerase family. Interacts with VP3 (Potential). Interacts with VP2; this interaction activates VP1. Interacts with NSP5; this interaction is probably necessary for the formation of functional virus factories. Interacts with NSP2; this interaction is weak. Mg(2+) serves as cofactor.

It is found in the virion. It catalyses the reaction RNA(n) + a ribonucleoside 5'-triphosphate = RNA(n+1) + diphosphate. RNA-directed RNA polymerase that is involved in both transcription and genome replication. Together with VP3 capping enzyme, forms an enzyme complex positioned near the channels situated at each of the five-fold vertices of the core. Following infection, the outermost layer of the virus is lost, leaving a double-layered particle (DLP) made up of the core and VP6 shell. VP1 then catalyzes the transcription of fully conservative plus-strand genomic RNAs that are extruded through the DLP's channels into the cytoplasm where they function as mRNAs for translation of viral proteins. One copy of each of the viral (+)RNAs is also recruited during core assembly, together with newly synthesized polymerase complexes and VP2. The polymerase of these novo-formed particles catalyzes the synthesis of complementary minus-strands leading to dsRNA formation. To do so, the polymerase specifically recognizes and binds 4 bases 5'-UGUG-3' in the conserved 3'-sequence of plus-strand RNA templates. VP2 presumably activates the autoinhibited VP1-RNA complex to coordinate packaging and genome replication. Once dsRNA synthesis is complete, the polymerase switches to the transcriptional mode, thus providing secondary transcription. The polypeptide is RNA-directed RNA polymerase (Homo sapiens (Human)).